The chain runs to 363 residues: MIIDTTEIETINSFSKLESLKEVYGIIWMLVPIVTLVLGITIGVLVIVWLEREISAGIQQRIGPEYAGPLGILQALADGTKLLLKENLIPSTGDTRLFSIGPSIAVISIFLSYSVIPFGDHLVLADLSIGVFFWIAISSIAPVGLLMSGYGSNNKYSFLGGLRAAAQSISYEIPLALCVLSISLLSNSLSTVDIVEAQSKYGFWGWNLWRQPIGFIVFLISSLAECERLPFDLPEAEEELVAGYQTEYSGIKFGLFYIASYLNLLVSSLFVTVLYLGGWNLSIPYIFVPDIFGINKGGKVFGTLIGIFITLAKTYLFLFIPIATRWTLPRLRMDQLLNLGWKFLLPISLGNLLLTTSSQLLSL.

The next 8 helical transmembrane spans lie at 30 to 50 (LVPI…IVWL), 98 to 118 (FSIG…VIPF), 127 to 147 (LSIG…GLLM), 165 to 185 (AAQS…ISLL), 203 to 223 (FWGW…ISSL), 248 to 268 (YSGI…LVSS), 300 to 320 (VFGT…FLFI), and 336 to 356 (LLNL…LLTT).

Belongs to the complex I subunit 1 family. In terms of assembly, NDH is composed of at least 16 different subunits, 5 of which are encoded in the nucleus.

It is found in the plastid. Its subcellular location is the chloroplast thylakoid membrane. It carries out the reaction a plastoquinone + NADH + (n+1) H(+)(in) = a plastoquinol + NAD(+) + n H(+)(out). It catalyses the reaction a plastoquinone + NADPH + (n+1) H(+)(in) = a plastoquinol + NADP(+) + n H(+)(out). Functionally, NDH shuttles electrons from NAD(P)H:plastoquinone, via FMN and iron-sulfur (Fe-S) centers, to quinones in the photosynthetic chain and possibly in a chloroplast respiratory chain. The immediate electron acceptor for the enzyme in this species is believed to be plastoquinone. Couples the redox reaction to proton translocation, and thus conserves the redox energy in a proton gradient. This Solanum lycopersicum (Tomato) protein is NAD(P)H-quinone oxidoreductase subunit 1, chloroplastic.